Here is a 546-residue protein sequence, read N- to C-terminus: Chaperonin GroEL 3 (546 aa).

ATP-binding positions include 30-33 (TLGP), K51, 87-91 (DGTTT), G415, and D496.

This sequence belongs to the chaperonin (HSP60) family. As to quaternary structure, forms a cylinder of 14 subunits composed of two heptameric rings stacked back-to-back. Interacts with the co-chaperonin GroES.

Its subcellular location is the cytoplasm. It carries out the reaction ATP + H2O + a folded polypeptide = ADP + phosphate + an unfolded polypeptide.. Its function is as follows. Together with its co-chaperonin GroES, plays an essential role in assisting protein folding. The GroEL-GroES system forms a nano-cage that allows encapsulation of the non-native substrate proteins and provides a physical environment optimized to promote and accelerate protein folding. The polypeptide is Chaperonin GroEL 3 (Bradyrhizobium diazoefficiens (strain JCM 10833 / BCRC 13528 / IAM 13628 / NBRC 14792 / USDA 110)).